We begin with the raw amino-acid sequence, 94 residues long: MSDFDSNLDLAGTGASPAEAAELQRMLAVEQQKAQFTAQVHNFMDVCWDKCIDRPGNKLDSRTESCLVSCVDRFIDTTLSITNRFAQIVQKGAH.

The Twin CX3C motif signature appears at 47-70; the sequence is CWDKCIDRPGNKLDSRTESCLVSC. 2 disulfides stabilise this stretch: Cys-47-Cys-70 and Cys-51-Cys-66.

The protein belongs to the small Tim family. As to quaternary structure, heterohexamer; composed of 3 copies of TIMM8A and 3 copies of TIMM13, named soluble 70 kDa complex. Associates with the TIM22 complex, whose core is composed of TIMM22.

It localises to the mitochondrion inner membrane. Mitochondrial intermembrane chaperone that participates in the import and insertion of some multi-pass transmembrane proteins into the mitochondrial inner membrane. Also required for the transfer of beta-barrel precursors from the TOM complex to the sorting and assembly machinery (SAM complex) of the outer membrane. Acts as a chaperone-like protein that protects the hydrophobic precursors from aggregation and guide them through the mitochondrial intermembrane space. The TIMM8-TIMM13 complex mediates the import of some proteins while the predominant TIMM9-TIMM10 70 kDa complex mediates the import of much more proteins. This is Mitochondrial import inner membrane translocase subunit Tim8 A (timm8a) from Xenopus laevis (African clawed frog).